Consider the following 264-residue polypeptide: Glutamate racemase (264 aa).

Substrate contacts are provided by residues 11–12 (DS) and 43–44 (YG). The active-site Proton donor/acceptor is the Cys74. Position 75-76 (75-76 (NT)) interacts with substrate. Cys193 (proton donor/acceptor) is an active-site residue. 194-195 (TH) lines the substrate pocket.

This sequence belongs to the aspartate/glutamate racemases family.

The enzyme catalyses L-glutamate = D-glutamate. It participates in cell wall biogenesis; peptidoglycan biosynthesis. Provides the (R)-glutamate required for cell wall biosynthesis. The protein is Glutamate racemase of Bifidobacterium longum subsp. infantis (strain ATCC 15697 / DSM 20088 / JCM 1222 / NCTC 11817 / S12).